Consider the following 906-residue polypeptide: Protein translocase subunit SecA (906 aa).

Residues Gln87, 105-109 (GEGKT), and Asp507 contribute to the ATP site. 4 residues coordinate Zn(2+): Cys890, Cys892, Cys901, and His902.

Belongs to the SecA family. Monomer and homodimer. Part of the essential Sec protein translocation apparatus which comprises SecA, SecYEG and auxiliary proteins SecDF-YajC and YidC. Zn(2+) serves as cofactor.

It localises to the cell inner membrane. Its subcellular location is the cytoplasm. It catalyses the reaction ATP + H2O + cellular proteinSide 1 = ADP + phosphate + cellular proteinSide 2.. Its function is as follows. Part of the Sec protein translocase complex. Interacts with the SecYEG preprotein conducting channel. Has a central role in coupling the hydrolysis of ATP to the transfer of proteins into and across the cell membrane, serving both as a receptor for the preprotein-SecB complex and as an ATP-driven molecular motor driving the stepwise translocation of polypeptide chains across the membrane. This chain is Protein translocase subunit SecA, found in Laribacter hongkongensis (strain HLHK9).